The chain runs to 489 residues: Aspartate/glutamate permease AcaP (489 aa).

The next 12 membrane-spanning stretches (helical) occupy residues 6-26 (IRWF…GNVV), 36-56 (VVTS…LIVG), 91-111 (VVHI…FGWV), 122-142 (MSMT…LWLS), 152-172 (IGGL…VMAI), 195-215 (IPKF…AVGG), 238-258 (FLLA…MGMI), 290-310 (LMIV…AFSI), 342-362 (GYTL…LGIG), 373-393 (NLNS…FIML), 413-433 (AMIA…LGMV), and 449-469 (LASN…LPFI).

The protein belongs to the amino acid-polyamine-organocation (APC) superfamily. Glutamate:GABA antiporter (GGA) (TC 2.A.3.7) family.

Its subcellular location is the cell membrane. In terms of biological role, involved in aspartate and glutamate uptake. Plays no significant role in the excretion of accumulated glutamate. The chain is Aspartate/glutamate permease AcaP from Lactococcus lactis subsp. cremoris (strain MG1363).